The primary structure comprises 540 residues: Dynein axonemal assembly factor 3 homolog (540 aa).

The disordered stretch occupies residues 480 to 499 (AVTEAMPESTFKYDTDTDYG).

This sequence belongs to the DNAAF3 family. Expressed in mechanosensory chordotonal (Ch) neurons, spermatocytes and spermatids (at protein level).

Its subcellular location is the cytoplasm. It is found in the dynein axonemal particle. Functionally, required for the assembly of axonemal inner and outer dynein arms. Involved in the cytoplasmic preassembly of dyneins into complexes before their transport into cilia. Essential for the development of axonemal dynein motors in the sensory cilium of mechanosensory chordotonal (Ch) neurons and sperm flagellum, and consequently, is required for the mechanotransduction process of hearing and sperm mobility. The sequence is that of Dynein axonemal assembly factor 3 homolog from Drosophila melanogaster (Fruit fly).